The following is a 51-amino-acid chain: MWYFSWLLGLPLAAAFAVLNAMWYELMDDRARKRLAADPTAELALEGNKHH.

Residues methionine 1–tyrosine 3 lie on the Cytoplasmic side of the membrane. A helical membrane pass occupies residues phenylalanine 4–leucine 26. Topologically, residues methionine 27 to histidine 51 are periplasmic.

The protein belongs to the cytochrome ubiquinol oxidase subunit X family. May be a subunit of cytochrome ubiquinol oxidase.

It is found in the cell inner membrane. It carries out the reaction 2 a ubiquinol + O2(in) + 4 H(+)(in) = 2 a ubiquinone + 2 H2O(in) + 4 H(+)(out). It functions in the pathway energy metabolism; oxidative phosphorylation. In terms of biological role, required for correct functioning of cytochrome bd oxidase. In Brucella abortus (strain 2308), this protein is Cytochrome bd ubiquinol oxidase subunit X (cydX).